Consider the following 344-residue polypeptide: Probable electron transfer flavoprotein subunit alpha, mitochondrial (344 aa).

Residue 284-312 (LYIAIGVSGAVQHLAGMKDSKVIVAINND) participates in FAD binding.

The protein belongs to the ETF alpha-subunit/FixB family. Heterodimer of an alpha and a beta subunit. FAD serves as cofactor.

It localises to the mitochondrion matrix. Functionally, the electron transfer flavoprotein serves as a specific electron acceptor for several dehydrogenases, including five acyl-CoA dehydrogenases, glutaryl-CoA and sarcosine dehydrogenase. It transfers the electrons to the main mitochondrial respiratory chain via ETF-ubiquinone oxidoreductase (ETF dehydrogenase). The polypeptide is Probable electron transfer flavoprotein subunit alpha, mitochondrial (AIM45) (Saccharomyces cerevisiae (strain ATCC 204508 / S288c) (Baker's yeast)).